We begin with the raw amino-acid sequence, 447 residues long: MIKIYDTMSRDLREFVPIEDGKIKMYVCGPTVYNYIHVGNARSTVAFDTIRRYFEYRGYKVAYISNFTDVDDKIINRAREEGITPQEVADKYIAAFREDVTALGVKPATRHPRVVEFMADIIRFVEDLIERGFAYESQGDVYFRVEKSHNYAKLANKTLEDLELGASGRTDEETARKENPVDFALWKSSKPGEISWDSPWGPGRPGWHIECSVMSTEILGDTIDIHGGGADLEFPHHTNEIAQSEAKTGKAFANYWMHNGFVNIDNVKMSKSLGNFITVHDALKTLDGQVLRFFFATQHYRKPINFTEKAVRDAETNLKYLKNTYEQPFTGNVDAQELQNFKDKFVAAMDEDFNAANGITVVFEMAKWINSGNYDASVKQALADMLEIFGIVFVEEVLDAEIEDLIQKRQEARANRDFETADQIRDQLVTQGIKLLDTKDGVRWTRD.

Residue cysteine 28 coordinates Zn(2+). A 'HIGH' region motif is present at residues 30–40; that stretch reads PTVYNYIHVGN. Residues cysteine 211, histidine 236, and glutamate 240 each coordinate Zn(2+). Positions 268 to 272 match the 'KMSKS' region motif; it reads KMSKS. Lysine 271 is a binding site for ATP.

The protein belongs to the class-I aminoacyl-tRNA synthetase family. Monomer. It depends on Zn(2+) as a cofactor.

The protein resides in the cytoplasm. It carries out the reaction tRNA(Cys) + L-cysteine + ATP = L-cysteinyl-tRNA(Cys) + AMP + diphosphate. This is Cysteine--tRNA ligase from Streptococcus pneumoniae (strain ATCC BAA-255 / R6).